The following is a 315-amino-acid chain: Gamma-hemolysin component C (315 aa).

The first 29 residues, 1–29, serve as a signal peptide directing secretion; the sequence is MLKNKILATTLSVSLLAPLANPLLENAKA.

The protein belongs to the aerolysin family. Toxicity requires sequential binding and synergistic association of a class S and a class F component which form heterooligomeric complexes. HlgC (class S) associates with HlgB (class F) thus forming an CB toxin.

Functionally, toxin that seems to act by forming pores in the membrane of the cell. Has a hemolytic and a leucotoxic activity. This chain is Gamma-hemolysin component C (hlgC), found in Staphylococcus aureus (strain Mu50 / ATCC 700699).